A 150-amino-acid chain; its full sequence is Sulfur-rich protein, serovars L1/L3 (150 aa).

Positions 1–20 (MSTVPVVQGAGSSNSAQDIS) are disordered. Helical transmembrane passes span 43–63 (VGLV…VSAA) and 69–89 (IYLA…ILSM).

It is found in the membrane. This is Sulfur-rich protein, serovars L1/L3 (srp) from Chlamydia trachomatis.